Reading from the N-terminus, the 486-residue chain is Glutamyl-tRNA(Gln) amidotransferase subunit A (486 aa).

Active-site charge relay system residues include Lys-78 and Ser-153. Ser-177 serves as the catalytic Acyl-ester intermediate.

This sequence belongs to the amidase family. GatA subfamily. Heterotrimer of A, B and C subunits.

It carries out the reaction L-glutamyl-tRNA(Gln) + L-glutamine + ATP + H2O = L-glutaminyl-tRNA(Gln) + L-glutamate + ADP + phosphate + H(+). Allows the formation of correctly charged Gln-tRNA(Gln) through the transamidation of misacylated Glu-tRNA(Gln) in organisms which lack glutaminyl-tRNA synthetase. The reaction takes place in the presence of glutamine and ATP through an activated gamma-phospho-Glu-tRNA(Gln). The chain is Glutamyl-tRNA(Gln) amidotransferase subunit A from Desulfosudis oleivorans (strain DSM 6200 / JCM 39069 / Hxd3) (Desulfococcus oleovorans).